The following is a 397-amino-acid chain: 2-deoxy-scyllo-inosose synthase (397 aa).

Residues Asp-41, 71 to 74 (EPYK), 103 to 107 (GVIGN), 127 to 128 (TS), 138 to 140 (SLK), and 149 to 150 (KN) contribute to the NAD(+) site. Lys-140 is a catalytic residue. Residue Glu-182 participates in Co(2+) binding. Glu-242 is a catalytic residue. Co(2+) contacts are provided by His-245 and His-261.

This sequence belongs to the sugar phosphate cyclases superfamily. DOI synthase family. It depends on NAD(+) as a cofactor. Co(2+) serves as cofactor.

It carries out the reaction D-glucose 6-phosphate = 2-deoxy-L-scyllo-inosose + phosphate. Its pathway is metabolic intermediate biosynthesis; 2-deoxystreptamine biosynthesis; 2-deoxystreptamine from D-glucose 6-phosphate: step 1/4. It functions in the pathway antibiotic biosynthesis; gentamicin biosynthesis. Its function is as follows. Catalyzes the intramolecular carbocycle formation from D-glucose-6-phosphate to 2-deoxy-scyllo-inosose (DOI). The polypeptide is 2-deoxy-scyllo-inosose synthase (gtmA) (Micromonospora echinospora (Micromonospora purpurea)).